The sequence spans 132 residues: MRHYEIVFMVHPDQSEQVPGMIERYSATITNAAGQIHRLEDWGRRQLAYPINKLHKAHYVLLNVEAPQEAIDELETNFRFNDAVIRSMVMRVKHAVTEASPMVKAKDERRGDRREDFANETADDADAGDSEE.

The segment at alanine 99–glutamate 132 is disordered. Residues lysine 104–phenylalanine 117 are compositionally biased toward basic and acidic residues. Acidic residues predominate over residues threonine 121–glutamate 132.

Belongs to the bacterial ribosomal protein bS6 family.

Functionally, binds together with bS18 to 16S ribosomal RNA. This Serratia proteamaculans (strain 568) protein is Small ribosomal subunit protein bS6.